The primary structure comprises 360 residues: 3-dehydroquinate synthase (360 aa).

NAD(+)-binding positions include aspartate 71–lysine 76, glycine 105–aspartate 109, threonine 129–threonine 130, lysine 142, lysine 151, and phenylalanine 169–threonine 172. Zn(2+)-binding residues include glutamate 184, histidine 247, and histidine 264.

This sequence belongs to the sugar phosphate cyclases superfamily. Dehydroquinate synthase family. NAD(+) is required as a cofactor. It depends on Co(2+) as a cofactor. Requires Zn(2+) as cofactor.

Its subcellular location is the cytoplasm. It catalyses the reaction 7-phospho-2-dehydro-3-deoxy-D-arabino-heptonate = 3-dehydroquinate + phosphate. It functions in the pathway metabolic intermediate biosynthesis; chorismate biosynthesis; chorismate from D-erythrose 4-phosphate and phosphoenolpyruvate: step 2/7. Its function is as follows. Catalyzes the conversion of 3-deoxy-D-arabino-heptulosonate 7-phosphate (DAHP) to dehydroquinate (DHQ). In Buchnera aphidicola subsp. Schizaphis graminum (strain Sg), this protein is 3-dehydroquinate synthase.